A 694-amino-acid chain; its full sequence is Elongation factor G 1 (694 aa).

The tr-type G domain occupies S5–T280. Residues A14–T21, D78–H82, and N132–D135 each bind GTP.

Belongs to the TRAFAC class translation factor GTPase superfamily. Classic translation factor GTPase family. EF-G/EF-2 subfamily.

It localises to the cytoplasm. In terms of biological role, catalyzes the GTP-dependent ribosomal translocation step during translation elongation. During this step, the ribosome changes from the pre-translocational (PRE) to the post-translocational (POST) state as the newly formed A-site-bound peptidyl-tRNA and P-site-bound deacylated tRNA move to the P and E sites, respectively. Catalyzes the coordinated movement of the two tRNA molecules, the mRNA and conformational changes in the ribosome. The sequence is that of Elongation factor G 1 from Methylococcus capsulatus (strain ATCC 33009 / NCIMB 11132 / Bath).